A 101-amino-acid chain; its full sequence is Large ribosomal subunit protein eL43 (101 aa).

Residues 40–62 (CPSCRSLVRLQRIAFGIWKCPKC) form a C4-type zinc finger.

The protein belongs to the eukaryotic ribosomal protein eL43 family. Zn(2+) is required as a cofactor.

This chain is Large ribosomal subunit protein eL43, found in Pyrobaculum neutrophilum (strain DSM 2338 / JCM 9278 / NBRC 100436 / V24Sta) (Thermoproteus neutrophilus).